Consider the following 269-residue polypeptide: Protein MGF 110-1L (269 aa).

The first 26 residues, 1–26 (MLGLQIFTLLSIPTLLYTYELELLDL), serve as a signal peptide directing secretion. The stretch at 1 to 145 (MLGLQIFTLL…YVRKRSLQTV (145 aa)) is one A repeat. The Extracellular portion of the chain corresponds to 27-116 (TRTPPEKELE…HEWHEAVIRK (90 aa)). N-linked (GlcNAc...) asparagine; by host glycosylation occurs at N75. The helical transmembrane segment at 117–137 (WQKLLTYGFYLVGCVLVANYV) threads the bilayer. Over 138–144 (RKRSLQT) the chain is Cytoplasmic. A helical membrane pass occupies residues 145-165 (VMYLLVLLVIFFLLSQLMLYR). The stretch at 147–269 (YLLVLLVIFF…DNLMKKQDIM (123 aa)) is one B repeat. Residues 166–269 (ELEDKKHKIG…DNLMKKQDIM (104 aa)) are Extracellular-facing.

This sequence belongs to the asfivirus MGF 110 family.

The protein resides in the host membrane. In terms of biological role, plays a role in virus cell tropism, and may be required for efficient virus replication in macrophages. This chain is Protein MGF 110-1L, found in African swine fever virus (isolate Warthog/Namibia/Wart80/1980) (ASFV).